A 247-amino-acid chain; its full sequence is Probable transcriptional regulatory protein GAU_0635 (247 aa).

Belongs to the TACO1 family.

The protein localises to the cytoplasm. The chain is Probable transcriptional regulatory protein GAU_0635 from Gemmatimonas aurantiaca (strain DSM 14586 / JCM 11422 / NBRC 100505 / T-27).